A 240-amino-acid polypeptide reads, in one-letter code: Octanoyltransferase (240 aa).

A BPL/LPL catalytic domain is found at 49 to 233 (HQAEELVWLL…AFESVFGATR (185 aa)). Residues 87–94 (RGGQVTYH), 162–164 (AIG), and 175–177 (GIA) each bind substrate. Cysteine 193 acts as the Acyl-thioester intermediate in catalysis.

Belongs to the LipB family.

It is found in the cytoplasm. It catalyses the reaction octanoyl-[ACP] + L-lysyl-[protein] = N(6)-octanoyl-L-lysyl-[protein] + holo-[ACP] + H(+). The protein operates within protein modification; protein lipoylation via endogenous pathway; protein N(6)-(lipoyl)lysine from octanoyl-[acyl-carrier-protein]: step 1/2. Functionally, catalyzes the transfer of endogenously produced octanoic acid from octanoyl-acyl-carrier-protein onto the lipoyl domains of lipoate-dependent enzymes. Lipoyl-ACP can also act as a substrate although octanoyl-ACP is likely to be the physiological substrate. This Bradyrhizobium sp. (strain ORS 278) protein is Octanoyltransferase.